The primary structure comprises 203 residues: Small ribosomal subunit protein uS4 (203 aa).

The region spanning 93 to 156 is the S4 RNA-binding domain; sequence QRLDNVVFRL…MKVPAILEAV (64 aa).

The protein belongs to the universal ribosomal protein uS4 family. As to quaternary structure, part of the 30S ribosomal subunit. Contacts protein S5. The interaction surface between S4 and S5 is involved in control of translational fidelity.

In terms of biological role, one of the primary rRNA binding proteins, it binds directly to 16S rRNA where it nucleates assembly of the body of the 30S subunit. Functionally, with S5 and S12 plays an important role in translational accuracy. The protein is Small ribosomal subunit protein uS4 of Lactococcus lactis subsp. lactis (strain IL1403) (Streptococcus lactis).